A 20-amino-acid polypeptide reads, in one-letter code: Brevinin-1SPb (20 aa).

Cys-14 and Cys-20 are disulfide-bonded.

Expressed by the skin glands.

The protein localises to the secreted. Its function is as follows. Antimicrobial peptide with activity against Gram-negative and Gram-positive bacteria (MIC=50 uM against E.coli, MIC=6 uM against S.aureus) and fungi (MIC=13 uM against C.albicans). Shows hemolytic activity on human erythrocytes (HC(50)=25 uM). This Lithobates septentrionalis (Mink frog) protein is Brevinin-1SPb.